Reading from the N-terminus, the 213-residue chain is Adenylate kinase (213 aa).

10-15 (GAGKGT) is an ATP binding site. The interval 30–59 (STGDIFRANIKNNTELGQKAKTYMDKGELV) is NMP. Residues Thr31, Arg36, 57–59 (ELV), 85–88 (GFPR), and Gln92 contribute to the AMP site. The segment at 126–163 (GRRACVGCGATYHIQFNPTKVEGICDACGEKLILRDDD) is LID. Position 127 (Arg127) interacts with ATP. Residues Cys130 and Cys133 each coordinate Zn(2+). ATP is bound at residue 136-137 (TY). 2 residues coordinate Zn(2+): Cys150 and Cys153. Arg160 and Arg171 together coordinate AMP. Gln199 lines the ATP pocket.

Belongs to the adenylate kinase family. In terms of assembly, monomer.

It localises to the cytoplasm. The enzyme catalyses AMP + ATP = 2 ADP. It functions in the pathway purine metabolism; AMP biosynthesis via salvage pathway; AMP from ADP: step 1/1. Catalyzes the reversible transfer of the terminal phosphate group between ATP and AMP. Plays an important role in cellular energy homeostasis and in adenine nucleotide metabolism. This chain is Adenylate kinase, found in Lachnospira eligens (strain ATCC 27750 / DSM 3376 / VPI C15-48 / C15-B4) (Eubacterium eligens).